The following is a 298-amino-acid chain: HTH-type transcriptional regulator CzcR (298 aa).

An HTH lysR-type domain is found at 11–68 (MELRDLQIFQSVADQGSVSSAAKELNYVQSNVTARIKQLENELKTPLFYRHKRGMTLT). Residues 28 to 47 (VSSAAKELNYVQSNVTARIK) constitute a DNA-binding region (H-T-H motif).

This sequence belongs to the LysR transcriptional regulatory family.

This is HTH-type transcriptional regulator CzcR (czcR) from Bacillus thuringiensis (strain Al Hakam).